The sequence spans 325 residues: Glutarate 2-hydroxylase (325 aa).

Fe cation-binding residues include histidine 160, aspartate 162, and histidine 292.

The protein belongs to the glutarate hydroxylase family. As to quaternary structure, homotetramer. It depends on Fe(2+) as a cofactor.

The catalysed reaction is glutarate + 2-oxoglutarate + O2 = (S)-2-hydroxyglutarate + succinate + CO2. Its pathway is amino-acid degradation. Its function is as follows. Acts as an alpha-ketoglutarate-dependent dioxygenase catalyzing hydroxylation of glutarate (GA) to L-2-hydroxyglutarate (L2HG). Functions in a L-lysine degradation pathway that proceeds via cadaverine, glutarate and L-2-hydroxyglutarate. The polypeptide is Glutarate 2-hydroxylase (Escherichia coli (strain K12 / MC4100 / BW2952)).